Reading from the N-terminus, the 417-residue chain is Probable lysophospholipase BODYGUARD 4 (417 aa).

The first 49 residues, 1 to 49 (MSFPRKFGTAIHAALSFIVFFFLDLLDAILCVVYEFVDEILEENSTGCY), serve as a signal peptide directing secretion. Cysteine 50 carries the N-palmitoyl cysteine lipid modification. The AB hydrolase-1 domain maps to 150-259 (VIFIHGFMGS…PPYFPSSVEG (110 aa)). The active site involves histidine 154. The active-site Nucleophile is the serine 225. Residues aspartate 367 and histidine 395 each act as charge relay system in the active site.

In terms of tissue distribution, expressed in epidermal cells.

It localises to the cell membrane. The protein resides in the secreted. The protein localises to the cell wall. Its function is as follows. Involved in cuticle development and morphogenesis. This is Probable lysophospholipase BODYGUARD 4 from Arabidopsis thaliana (Mouse-ear cress).